The chain runs to 343 residues: Phosphate acyltransferase (343 aa).

The protein belongs to the PlsX family. Homodimer. Probably interacts with PlsY.

It localises to the cytoplasm. The catalysed reaction is a fatty acyl-[ACP] + phosphate = an acyl phosphate + holo-[ACP]. It participates in lipid metabolism; phospholipid metabolism. Catalyzes the reversible formation of acyl-phosphate (acyl-PO(4)) from acyl-[acyl-carrier-protein] (acyl-ACP). This enzyme utilizes acyl-ACP as fatty acyl donor, but not acyl-CoA. In Coxiella burnetii (strain RSA 331 / Henzerling II), this protein is Phosphate acyltransferase.